Here is a 155-residue protein sequence, read N- to C-terminus: 3-dehydroquinate dehydratase (155 aa).

Catalysis depends on Y32, which acts as the Proton acceptor. Substrate is bound by residues N84, H90, and D97. H110 acts as the Proton donor in catalysis. Residues 111 to 112 (LS) and R121 contribute to the substrate site.

The protein belongs to the type-II 3-dehydroquinase family. Homododecamer.

It catalyses the reaction 3-dehydroquinate = 3-dehydroshikimate + H2O. Its pathway is metabolic intermediate biosynthesis; chorismate biosynthesis; chorismate from D-erythrose 4-phosphate and phosphoenolpyruvate: step 3/7. Functionally, catalyzes a trans-dehydration via an enolate intermediate. The chain is 3-dehydroquinate dehydratase from Ralstonia pickettii (strain 12J).